The sequence spans 284 residues: Diaminopimelate epimerase (284 aa).

Positions 14 and 67 each coordinate substrate. Catalysis depends on Cys-76, which acts as the Proton donor. Substrate is bound by residues 77 to 78, Asn-166, Asn-199, and 217 to 218; these read GN and ER. The Proton acceptor role is filled by Cys-226. 227-228 is a binding site for substrate; that stretch reads GT.

This sequence belongs to the diaminopimelate epimerase family. Homodimer.

The protein localises to the cytoplasm. The enzyme catalyses (2S,6S)-2,6-diaminopimelate = meso-2,6-diaminopimelate. Its pathway is amino-acid biosynthesis; L-lysine biosynthesis via DAP pathway; DL-2,6-diaminopimelate from LL-2,6-diaminopimelate: step 1/1. Its function is as follows. Catalyzes the stereoinversion of LL-2,6-diaminopimelate (L,L-DAP) to meso-diaminopimelate (meso-DAP), a precursor of L-lysine and an essential component of the bacterial peptidoglycan. This Bacillus pumilus (strain SAFR-032) protein is Diaminopimelate epimerase.